Consider the following 373-residue polypeptide: Leucine aminopeptidase 1 (373 aa).

A signal peptide spans 1–18 (MKLLSVLALSATATSVLG). Asn136 carries an N-linked (GlcNAc...) asparagine glycan. Zn(2+) contacts are provided by His176 and Asp195. N-linked (GlcNAc...) asparagine glycosylation is present at Asn196. The Zn(2+) site is built by Glu234 and Asp261. Asn284 carries an N-linked (GlcNAc...) asparagine glycan. A disulfide bond links Cys310 and Cys314. His343 serves as a coordination point for Zn(2+).

It belongs to the peptidase M28 family. M28E subfamily. In terms of assembly, monomer. Zn(2+) serves as cofactor.

The protein localises to the secreted. Functionally, extracellular aminopeptidase which contributes to pathogenicity. This chain is Leucine aminopeptidase 1 (LAP1), found in Trichophyton equinum (Horse ringworm fungus).